The chain runs to 134 residues: RuBisCO chaperone RbcX (134 aa).

Residues 97 to 134 (SNGNHRRSLLERLTQVDSSSTDQTEPNPGESDTSEDSE) form a disordered region. Over residues 111–122 (QVDSSSTDQTEP) the composition is skewed to polar residues.

The protein belongs to the RbcX family. As to quaternary structure, homodimer (RbcX2). Interacts with the exposed C-terminal peptide of RbcL ('Glu-459-Asp-468'); binds 2 RbcL peptides per RbcX2, stapling them into an RbcL2 dimer. A slightly longer peptide binds with a higher affinity, but no long-term stable interaction with RbcL is detected. Contacts a second RbcL monomer via its peripheral polar surface.

It localises to the carboxysome. Its subcellular location is the cytoplasm. Functionally, an RbcL-specific chaperone. Required for assembly of the RbcL8 core, acting downstream of the major chaperonin (GroEL-GroES). Acts on newly folded RbcL, has a transient dynamic interaction with RbcL and is eventually displaced by RbcS. The central cleft of the RbcX homodimer (RbcX2) binds the C-terminus of an RbcL monomer, stabilizing the C-terminus and probably preventing its reassociation with chaperonin GroEL-ES. At the same time the peripheral region of RbcX2 binds a second RbcL monomer, bridging the RbcL homodimers in the correct orientation. The RbcX2(2)-bound RbcL dimers then assemble into the RbcL8 core (RbcL8-(RbcX2)8). RbcS binding triggers the release of RbcX2. Required for optimal reconstitution of RuBisCO into its RbcL8S8 holoenzyme form upon expression of rbcL-rbcS subunits in E.coli, and probably also in situ. A frameshift mutation that replaces half the protein reduces accumulation of both RbcL and RbcS subunits and halves activity of RuBisCO in situ and in E.coli. The sequence is that of RuBisCO chaperone RbcX from Picosynechococcus sp. (strain ATCC 27264 / PCC 7002 / PR-6) (Agmenellum quadruplicatum).